The primary structure comprises 148 residues: uncharacterized protein (148 aa).

Disordered regions lie at residues 1–86 (MCPP…VQSP) and 122–148 (RAHRLPQPKPPCQSRQRPSPDSQTSPC). The span at 38-57 (RPPKMQRRPRPPVAKRRRFP) shows a compositional bias: basic residues. A compositionally biased stretch (polar residues) spans 134-148 (QSRQRPSPDSQTSPC).

It belongs to the Epstein-Barr virus BLLF2 family.

This is an uncharacterized protein from Homo sapiens (Human).